The chain runs to 194 residues: 21 kDa hemolysin (194 aa).

The signal sequence occupies residues 1–19 (MRTRSRSTVRPLWPPPSPA). 2 consecutive BON domains span residues 49–118 (DDEV…RTGE) and 127–194 (IDSW…NYVQ).

The protein localises to the periplasm. In Actinobacillus pleuropneumoniae (Haemophilus pleuropneumoniae), this protein is 21 kDa hemolysin (hly).